Reading from the N-terminus, the 850-residue chain is Mitogen-activated protein kinase kinase kinase 11 (850 aa).

Phosphoserine is present on Ser11. Positions 16–35 (WNGSGSGGGGGTGGVRPEGS) are disordered. Over residues 17–31 (NGSGSGGGGGTGGVR) the composition is skewed to gly residues. A Phosphoserine modification is found at Ser35. Residues 42–106 (YANPVWTALF…PSNYVSRGGG (65 aa)) form the SH3 domain. Residues 118–380 (LRLEEVIGIG…ASILQQLEAL (263 aa)) enclose the Protein kinase domain. Residues 124 to 132 (IGIGGFGKV) and Lys145 each bind ATP. Residue Asp242 is the Proton acceptor of the active site. The residue at position 278 (Thr278) is a Phosphothreonine; by autocatalysis. The residue at position 282 (Ser282) is a Phosphoserine; by autocatalysis and MAP4K1. Ser395 carries the phosphoserine modification. 2 leucine-zipper regions span residues 404 to 425 (IQGLFDELRAKEKELLSREEEL) and 439 to 460 (LRRREHLLAQWELEVFERELTL). 2 positions are modified to phosphoserine: Ser508 and Ser525. The tract at residues 535–644 (QLEPTESGQT…SSGTPKLIQR (110 aa)) is disordered. The span at 538-547 (PTESGQTWGR) shows a compositional bias: polar residues. A phosphoserine mark is found at Ser549, Ser556, and Ser557. The span at 551–563 (RRLEDSSNGERRA) shows a compositional bias: basic and acidic residues. Residues 598–610 (SSPLGSPSTPPAL) show a composition bias toward low complexity. Position 655 is a phosphoserine (Ser655). A disordered region spans residues 657–850 (GLGRDLQPPG…QAPWAPEAGP (194 aa)). Over residues 677 to 693 (TAPPPAQMPSPCPPELP) the composition is skewed to pro residues. Positions 700 to 711 (LSQTTPDAHSSP) are enriched in polar residues. Ser709 is modified (phosphoserine). Thr712 bears the Phosphothreonine mark. 9 positions are modified to phosphoserine: Ser728, Ser731, Ser743, Ser751, Ser761, Ser773, Ser792, Ser796, and Ser818. Residues 763 to 776 (PLGLISRPRPSPLR) are compositionally biased toward low complexity. The span at 790 to 802 (RPSPLPSPQPAPR) shows a compositional bias: pro residues. Over residues 803–819 (RAPWTLFPDSDPFWDSP) the composition is skewed to low complexity.

This sequence belongs to the protein kinase superfamily. STE Ser/Thr protein kinase family. MAP kinase kinase kinase subfamily. Homodimer; undergoes dimerization during activation. Interacts with MAP2K4/MKK4 and MAP2K7/MKK7. Found in a complex with SH3RF1, RAC1, MAP2K7/MKK7, MAPK8IP1/JIP1 and MAPK8/JNK1. Mg(2+) serves as cofactor. In terms of processing, autophosphorylation on serine and threonine residues within the activation loop plays a role in enzyme activation. Thr-278 is likely to be the main autophosphorylation site. Phosphorylation of Ser-556 and Ser-557 is induced by CDC42.

It is found in the cytoplasm. Its subcellular location is the cytoskeleton. It localises to the microtubule organizing center. The protein resides in the centrosome. The enzyme catalyses L-seryl-[protein] + ATP = O-phospho-L-seryl-[protein] + ADP + H(+). The catalysed reaction is L-threonyl-[protein] + ATP = O-phospho-L-threonyl-[protein] + ADP + H(+). Its activity is regulated as follows. Homodimerization via the leucine zipper domains is required for autophosphorylation and subsequent activation. Functionally, activates the JUN N-terminal pathway. Required for serum-stimulated cell proliferation and for mitogen and cytokine activation of MAPK14 (p38), MAPK3 (ERK) and MAPK8 (JNK1) through phosphorylation and activation of MAP2K4/MKK4 and MAP2K7/MKK7. Plays a role in mitogen-stimulated phosphorylation and activation of BRAF, but does not phosphorylate BRAF directly. Influences microtubule organization during the cell cycle. The protein is Mitogen-activated protein kinase kinase kinase 11 (Map3k11) of Mus musculus (Mouse).